Reading from the N-terminus, the 169-residue chain is S-ribosylhomocysteine lyase (169 aa).

Fe cation contacts are provided by His54, His58, and Cys129.

Belongs to the LuxS family. Homodimer. Requires Fe cation as cofactor.

The enzyme catalyses S-(5-deoxy-D-ribos-5-yl)-L-homocysteine = (S)-4,5-dihydroxypentane-2,3-dione + L-homocysteine. In terms of biological role, involved in the synthesis of autoinducer 2 (AI-2) which is secreted by bacteria and is used to communicate both the cell density and the metabolic potential of the environment. The regulation of gene expression in response to changes in cell density is called quorum sensing. Catalyzes the transformation of S-ribosylhomocysteine (RHC) to homocysteine (HC) and 4,5-dihydroxy-2,3-pentadione (DPD). This Glaesserella parasuis serovar 5 (strain SH0165) (Haemophilus parasuis) protein is S-ribosylhomocysteine lyase.